The chain runs to 689 residues: tRNA 5-methylaminomethyl-2-thiouridine biosynthesis bifunctional protein MnmC (689 aa).

Residues M1–P245 form a tRNA (mnm(5)s(2)U34)-methyltransferase region. Positions I270–R689 are FAD-dependent cmnm(5)s(2)U34 oxidoreductase.

In the N-terminal section; belongs to the methyltransferase superfamily. tRNA (mnm(5)s(2)U34)-methyltransferase family. It in the C-terminal section; belongs to the DAO family. FAD serves as cofactor.

Its subcellular location is the cytoplasm. The catalysed reaction is 5-aminomethyl-2-thiouridine(34) in tRNA + S-adenosyl-L-methionine = 5-methylaminomethyl-2-thiouridine(34) in tRNA + S-adenosyl-L-homocysteine + H(+). Functionally, catalyzes the last two steps in the biosynthesis of 5-methylaminomethyl-2-thiouridine (mnm(5)s(2)U) at the wobble position (U34) in tRNA. Catalyzes the FAD-dependent demodification of cmnm(5)s(2)U34 to nm(5)s(2)U34, followed by the transfer of a methyl group from S-adenosyl-L-methionine to nm(5)s(2)U34, to form mnm(5)s(2)U34. The sequence is that of tRNA 5-methylaminomethyl-2-thiouridine biosynthesis bifunctional protein MnmC from Yersinia pseudotuberculosis serotype O:1b (strain IP 31758).